The sequence spans 690 residues: Sodium-dependent phosphate transport protein 2B (690 aa).

The tract at residues 1–42 (MAPWPELGDAQPNPDKYLEGAAGQQPTAPDKSKETNKTDNTE) is disordered. Over 1–100 (MAPWPELGDA…ILCFFQGIGR (100 aa)) the chain is Cytoplasmic. Residues 30-40 (DKSKETNKTDN) show a composition bias toward basic and acidic residues. A helical transmembrane segment spans residues 101 to 121 (LILLLGFLYFFVCSLDILSSA). Residues 122-135 (FQLVGGKMAGQFFS) are Extracellular-facing. A helical transmembrane segment spans residues 136 to 156 (NSSIMSNPLLGLVIGVLVTVL). Residues 157 to 212 (VQSSSTSTSIVVSMVSSSLLTVRAAIPIIMGANIGTSITNTIVALMQVGDRSEFRR) are Cytoplasmic-facing. Residues 213-233 (AFAGATVHDFFNWLSVLVLLP) form a helical membrane-spanning segment. Over 234–362 (VEVATHYLEI…IFVNFHLPDL (129 aa)) the chain is Extracellular. N-linked (GlcNAc...) asparagine glycosylation is found at Asn295, Asn308, Asn313, Asn321, and Asn340. Cys303 and Cys350 are joined by a disulfide. The helical transmembrane segment at 363–383 (AVGTILLILSLLVLCGCLIMI) threads the bilayer. Topologically, residues 384–407 (VKILGSVLKGQVATVIKKTINTDF) are cytoplasmic. Residues 408–428 (PFPFAWLTGYLAILVGAGMTF) traverse the membrane as a helical segment. The Extracellular segment spans residues 429-485 (IVQSSSVFTSALTPLIGIGVITIERAYPLTLGSNIGTTTTAILAALASPGNALRSSL). A helical membrane pass occupies residues 486-506 (QIALCHFFFNISGILLWYPIP). Topologically, residues 507-525 (FTRLPIRMAKGLGNISAKY) are cytoplasmic. A helical transmembrane segment spans residues 526–546 (RWFAVFYLIIFFFLIPLTVFG). The Extracellular portion of the chain corresponds to 547-552 (LSLAGW). The helical transmembrane segment at 553–573 (RVLVGVGVPVVFIIILVLCLR) threads the bilayer. Residues 574 to 689 (LLQSRCPRVL…ASDSKTECTA (116 aa)) are Cytoplasmic-facing.

The protein belongs to the SLC34A transporter family. In terms of tissue distribution, highly expressed in lung. Also detected in pancreas, kidney, small intestine, ovary, testis, prostate and mammary gland. In lung, it is found in alveolar type II cells but not in bronchiolar epithelium.

It is found in the apical cell membrane. The catalysed reaction is 3 Na(+)(out) + phosphate(out) = 3 Na(+)(in) + phosphate(in). Functionally, involved in actively transporting phosphate into cells via Na(+) cotransport. This Homo sapiens (Human) protein is Sodium-dependent phosphate transport protein 2B (SLC34A2).